The following is a 152-amino-acid chain: Transcriptional regulator MraZ (152 aa).

SpoVT-AbrB domains lie at 5 to 52 and 81 to 124; these read ASAV…PLNQ and ATEC…SESE.

It belongs to the MraZ family. In terms of assembly, forms oligomers.

Its subcellular location is the cytoplasm. It is found in the nucleoid. The polypeptide is Transcriptional regulator MraZ (Histophilus somni (strain 2336) (Haemophilus somnus)).